Consider the following 90-residue polypeptide: Acylphosphatase (90 aa).

Positions 5–90 constitute an Acylphosphatase-like domain; it reads CERFIVKGHV…YKPFRGFKIL (86 aa). Active-site residues include Arg20 and Asn38.

Belongs to the acylphosphatase family.

It catalyses the reaction an acyl phosphate + H2O = a carboxylate + phosphate + H(+). In Vibrio parahaemolyticus serotype O3:K6 (strain RIMD 2210633), this protein is Acylphosphatase (acyP).